The following is a 315-amino-acid chain: Ribonuclease Z (315 aa).

Residues H61, H63, D65, H66, H151, D219, and H278 each coordinate Zn(2+). D65 (proton acceptor) is an active-site residue.

It belongs to the RNase Z family. In terms of assembly, homodimer. The cofactor is Zn(2+).

It carries out the reaction Endonucleolytic cleavage of RNA, removing extra 3' nucleotides from tRNA precursor, generating 3' termini of tRNAs. A 3'-hydroxy group is left at the tRNA terminus and a 5'-phosphoryl group is left at the trailer molecule.. In terms of biological role, zinc phosphodiesterase, which displays some tRNA 3'-processing endonuclease activity. Probably involved in tRNA maturation, by removing a 3'-trailer from precursor tRNA. The chain is Ribonuclease Z from Clostridium botulinum (strain Alaska E43 / Type E3).